A 109-amino-acid polypeptide reads, in one-letter code: uncharacterized protein (109 aa).

The HTH cro/C1-type domain occupies 42–100; it reads LEEKLKQEKIDRKYLAEVTNIPYTTVSRIMRAEANREFNPEIDTILKIAKYFNCTMDEV. The H-T-H motif DNA-binding region spans 53–72; the sequence is RKYLAEVTNIPYTTVSRIMR.

This is an uncharacterized protein from Rickettsia conorii (strain ATCC VR-613 / Malish 7).